Consider the following 169-residue polypeptide: Transmembrane protein B169L (169 aa).

A run of 2 helical transmembrane segments spans residues 28–48 and 60–80; these read NPFIVALIITAVVLVVFFAIC and TAIYVYICIVALLFLHYYVLN. Asn88 carries an N-linked (GlcNAc...) asparagine; by host glycan. The interval 107–169 is disordered; sequence DEIIPPISPP…EVIMPSQYNN (63 aa). A compositionally biased stretch (low complexity) spans 144-154; it reads SKPASSADSKP.

Belongs to the asfivirus B169L family.

The protein localises to the host membrane. The protein resides in the virion. The polypeptide is Transmembrane protein B169L (Ornithodoros (relapsing fever ticks)).